The sequence spans 327 residues: Phenylalanine--tRNA ligase alpha subunit (327 aa).

Residue Glu252 participates in Mg(2+) binding.

It belongs to the class-II aminoacyl-tRNA synthetase family. Phe-tRNA synthetase alpha subunit type 1 subfamily. Tetramer of two alpha and two beta subunits. Requires Mg(2+) as cofactor.

Its subcellular location is the cytoplasm. The catalysed reaction is tRNA(Phe) + L-phenylalanine + ATP = L-phenylalanyl-tRNA(Phe) + AMP + diphosphate + H(+). The sequence is that of Phenylalanine--tRNA ligase alpha subunit from Vibrio parahaemolyticus serotype O3:K6 (strain RIMD 2210633).